The sequence spans 384 residues: MEGLGRSCLWLRRELSPPRPRLLLLDCRSRELYESARIGGALSVALPALLLRRLRRGSLSVRALLPGPPLQPPPPAPVLLYDQGGGRRRRGEAEAEAEEWEAESVLGTLLQKLREEGYLAYYLQGGFSRFQAECPHLCETSLAGRAGSSMAPVPGPVPVVGLGSLCLGSDCSDAESEADRDSMSCGLDSEGATPPPVGLRASFPVQILPNLYLGSARDSANLESLAKLGIRYILNVTPNLPNFFEKNGDFHYKQIPISDHWSQNLSRFFPEAIEFIDEALSQNCGVLVHCLAGVSRSVTVTVAYLMQKLHLSLNDAYDLVKRKKSNISPNFNFMGQLLDFERSLRLEERHSQEQGSGGQASAASNPPSFFTTPTSDGAFELAPT.

Residue S16 is modified to Phosphoserine. The 122-residue stretch at 18 to 139 (PRPRLLLLDC…FQAECPHLCE (122 aa)) folds into the Rhodanese domain. The region spanning 203-346 (FPVQILPNLY…LLDFERSLRL (144 aa)) is the Tyrosine-protein phosphatase domain. Position 262 is a phosphoserine (S262). C290 serves as the catalytic Phosphocysteine intermediate. Positions 348–384 (ERHSQEQGSGGQASAASNPPSFFTTPTSDGAFELAPT) are disordered. S351 is modified (phosphoserine). A compositionally biased stretch (polar residues) spans 359 to 375 (QASAASNPPSFFTTPTS).

The protein belongs to the protein-tyrosine phosphatase family. Non-receptor class dual specificity subfamily.

It is found in the cytoplasm. The enzyme catalyses O-phospho-L-tyrosyl-[protein] + H2O = L-tyrosyl-[protein] + phosphate. It carries out the reaction O-phospho-L-seryl-[protein] + H2O = L-seryl-[protein] + phosphate. It catalyses the reaction O-phospho-L-threonyl-[protein] + H2O = L-threonyl-[protein] + phosphate. Its function is as follows. Inactivates MAP kinases. Has a specificity for the ERK family. The protein is Dual specificity protein phosphatase 9 (DUSP9) of Homo sapiens (Human).